The sequence spans 275 residues: Penicillin-insensitive murein endopeptidase (275 aa).

The N-terminal stretch at M1–A19 is a signal peptide. 3 cysteine pairs are disulfide-bonded: C44–C264, C187–C235, and C216–C223. Positions 110, 113, 120, 147, and 211 each coordinate Zn(2+). The segment at D227–P262 is disordered. Pro residues predominate over residues Q244–P262.

This sequence belongs to the peptidase M74 family. As to quaternary structure, dimer. Zn(2+) is required as a cofactor.

The protein resides in the periplasm. Functionally, murein endopeptidase that cleaves the D-alanyl-meso-2,6-diamino-pimelyl amide bond that connects peptidoglycan strands. Likely plays a role in the removal of murein from the sacculus. The protein is Penicillin-insensitive murein endopeptidase of Yersinia pestis bv. Antiqua (strain Antiqua).